Reading from the N-terminus, the 144-residue chain is Cytochrome c oxidase subunit 4 isoform 1, mitochondrial (144 aa).

The Mitochondrial matrix segment spans residues 1–73 (SVVKSEDYTL…SFAEMNRGSN (73 aa)). K4 carries the N6-acetyllysine; alternate modification. N6-succinyllysine; alternate is present on K4. 2 positions are modified to phosphoserine: S31 and S33. Residue K35 is modified to N6-acetyllysine; alternate. K35 bears the N6-succinyllysine; alternate mark. Residue K42 is modified to N6-acetyllysine. The helical transmembrane segment at 74–99 (EWKTVVGAAMFFIGFTAILIMLEKRY) threads the bilayer. Residues 100–144 (VYGPLPHTFDKEWVAMQTKRMLDLKVNPVDGLASKWDYEKKEWKK) are Mitochondrial intermembrane-facing.

This sequence belongs to the cytochrome c oxidase IV family. In terms of assembly, component of the cytochrome c oxidase (complex IV, CIV), a multisubunit enzyme composed of 14 subunits. The complex is composed of a catalytic core of 3 subunits MT-CO1, MT-CO2 and MT-CO3, encoded in the mitochondrial DNA, and 11 supernumerary subunits COX4I, COX5A, COX5B, COX6A, COX6B, COX6C, COX7A, COX7B, COX7C, COX8 and NDUFA4, which are encoded in the nuclear genome. The complex exists as a monomer or a dimer and forms supercomplexes (SCs) in the inner mitochondrial membrane with NADH-ubiquinone oxidoreductase (complex I, CI) and ubiquinol-cytochrome c oxidoreductase (cytochrome b-c1 complex, complex III, CIII), resulting in different assemblies (supercomplex SCI(1)III(2)IV(1) and megacomplex MCI(2)III(2)IV(2)). Interacts with PHB2; the interaction decreases in absence of SPHK2. Interacts with AFG1L. Interacts with ABCB7; this interaction allows the regulation of cellular iron homeostasis and cellular reactive oxygen species (ROS) levels in cardiomyocytes. Interacts with FLVCR2; this interaction occurs in the absence of heme and is disrupted upon heme binding. Interacts with IRGC.

The protein resides in the mitochondrion inner membrane. Its pathway is energy metabolism; oxidative phosphorylation. Component of the cytochrome c oxidase, the last enzyme in the mitochondrial electron transport chain which drives oxidative phosphorylation. The respiratory chain contains 3 multisubunit complexes succinate dehydrogenase (complex II, CII), ubiquinol-cytochrome c oxidoreductase (cytochrome b-c1 complex, complex III, CIII) and cytochrome c oxidase (complex IV, CIV), that cooperate to transfer electrons derived from NADH and succinate to molecular oxygen, creating an electrochemical gradient over the inner membrane that drives transmembrane transport and the ATP synthase. Cytochrome c oxidase is the component of the respiratory chain that catalyzes the reduction of oxygen to water. Electrons originating from reduced cytochrome c in the intermembrane space (IMS) are transferred via the dinuclear copper A center (CU(A)) of subunit 2 and heme A of subunit 1 to the active site in subunit 1, a binuclear center (BNC) formed by heme A3 and copper B (CU(B)). The BNC reduces molecular oxygen to 2 water molecules using 4 electrons from cytochrome c in the IMS and 4 protons from the mitochondrial matrix. The sequence is that of Cytochrome c oxidase subunit 4 isoform 1, mitochondrial (COX4I1) from Pithecia pithecia (White-faced saki).